A 452-amino-acid polypeptide reads, in one-letter code: Pentatricopeptide repeat-containing protein At2g30780 (452 aa).

PPR repeat units lie at residues 137-171 (TASVYNSLMSVYMWNGLAEECQSLFKDFRRQTHCA), 173-207 (TVVTYNILVSVYGRLLMVKNMEAAFEELQKVKLPP), 208-242 (NSVTYNFLIAGYMTAWNWDKMEATFQEMKRGPVEP), 243-273 (DTDTYQLMLRGYANSGNLNRMEEMYEVIKDQ), 350-384 (KSSIMRAIIAAYFRCNEVDNLANFVKRAESAGWKL), 385-419 (CRSLYHCKIMMYGSQKRFEEMEGVVNEMAETNYGL), and 420-452 (VTKTFAIMIKAYKNHGMESDAEKVKGKMLKRGL).

This sequence belongs to the PPR family. P subfamily.

The sequence is that of Pentatricopeptide repeat-containing protein At2g30780 from Arabidopsis thaliana (Mouse-ear cress).